The chain runs to 537 residues: Cytochrome P450 27C1 (537 aa).

Cysteine 483 is a heme binding site.

It belongs to the cytochrome P450 family. Heme serves as cofactor. In terms of tissue distribution, expressed in the dorsal third of retinal pigment epithelium, but not in the ventral counterpart (at protein level).

The protein resides in the membrane. It catalyses the reaction all-trans-retinol + 2 reduced [adrenodoxin] + O2 + 2 H(+) = all-trans-3,4-didehydroretinol + 2 oxidized [adrenodoxin] + 2 H2O. Efficiently catalyzes the conversion of all-trans retinol (also called vitamin A1, the precursor of 11-cis retinal) to 3,4-didehydroretinol (also called vitamin A2, the precursor of 11-cis 3,4-didehydroretinal), also acts on all-trans retinal and all-trans retinoic acid. The replacement of 11-cis retinal chromophore in photopigments with 11-cis 3,4-didehydroretinal enhances sensitivity to long-wavelength light. This may improve vision in fresh water which is often turbid. The polypeptide is Cytochrome P450 27C1 (cyp27c1) (Aquarana catesbeiana (American bullfrog)).